A 601-amino-acid polypeptide reads, in one-letter code: Transcription factor Ken (601 aa).

Residues 33-101 (ADLTIVCENK…LYSGQTCITS (69 aa)) form the BTB domain. Disordered stretches follow at residues 188-276 (AAEC…TINP), 331-365 (LSDGSDINSSPENYVVTPHRKRRPGFHNTQSDNQP), and 471-491 (DHPEGRSGSASGSGANLAGSN). Composition is skewed to basic and acidic residues over residues 190–200 (ECERSGGHNNK) and 207–216 (CTHKDNKSDK). The span at 223 to 234 (NLSNAPPSGTSG) shows a compositional bias: polar residues. The span at 235–247 (SNSNISTSSNHQQ) shows a compositional bias: low complexity. Residues 248-258 (QQHHHHHHHNH) are compositionally biased toward basic residues. Positions 259 to 275 (NNNNNNNNNNSSSSTIN) are enriched in low complexity. Over residues 476–490 (RSGSASGSGANLAGS) the composition is skewed to low complexity. 3 C2H2-type zinc fingers span residues 500 to 522 (YRCEYCGKQFGMSWNLKTHLRVH), 528 to 551 (FACRLCVAMFKQKAHLLKHLCSVH), and 567 to 590 (YSCCFCSMCFESVQELVRHLSGHH).

As to expression, expressed from stage 5 in two rather faint stripes at positions of 64% (anterior domain; AD) and 17% (posterior domain; PD) egg length. During early gastrulation, at stage 6, these two stripes become more evident and detectable at the region posterior to the cephalic furrow and in the hindgut primordium. The AD disappears as gastrulation proceeds, while the PD remains. At stage 15, the AD appears again in the foregut, and PD expression in the hindgut and anal pad. In imaginal disks, it is ubiquitously expressed in both males and females in genital and eye-antennal disks. Not expressed in the brain. In genital disks, it is expressed along the margin of the anterior bulbus in males, while in females it is expressed in the posterior compartment along the anterior-posterior border, with medial expansion in the most posterior region.

The protein localises to the nucleus. Transcription factor required for terminalia development. Negative regulator of the JAK/STAT pathway: represses JAK/STAT-dependent expression of ventral veins lacking (vvl) in the posterior spiracles. The chain is Transcription factor Ken (ken) from Drosophila melanogaster (Fruit fly).